A 152-amino-acid polypeptide reads, in one-letter code: Actin-depolymerizing factor 2, isoform c (152 aa).

Residues 4–147 (GVKVDPSCKN…DEKSVKSDLM (144 aa)) enclose the ADF-H domain.

It belongs to the actin-binding proteins ADF family.

In terms of biological role, depolymerizes growing actin filaments in muscle cells; required for the assembly of actin filaments into the functional contractile myofilament lattice of muscle. This is Actin-depolymerizing factor 2, isoform c from Caenorhabditis elegans.